The chain runs to 623 residues: Protein Atg16l2 (623 aa).

A compositionally biased stretch (basic and acidic residues) spans 64–79 (PKDAISTRHEDWREEV). The disordered stretch occupies residues 64-93 (PKDAISTRHEDWREEVSGTGPDQVSSPASL). The stretch at 116-229 (VKKSAALDTL…ANQALVSQEL (114 aa)) forms a coiled coil. 7 WD repeats span residues 338-377 (AHLS…LEAN), 382-421 (GAGG…SKET), 424-458 (GHKD…LGRA), 459-502 (YCSR…CIQV), 504-543 (PVQG…IRQV), 550-589 (KCSS…LETS), and 593-623 (PHCT…VLWH).

This sequence belongs to the WD repeat ATG16 family. In terms of assembly, homooligomer. Heterooligomer with ATG16L2. Interacts with ATG5. Self-oligomerizes to form a 800-kDa complex composed of ATG12-ATG5 and ATG16L2. Interacts with RAB33B. As to expression, widely expressed.

The protein resides in the cytoplasm. It is found in the cytosol. May play a role in regulating epithelial homeostasis in an ATG16L1-dependent manner. The protein is Protein Atg16l2 (Atg16l2) of Mus musculus (Mouse).